A 1376-amino-acid polypeptide reads, in one-letter code: MLFVFILLLPSCLGYIGDFRCIQTVNYNGNNASAPSISTEAVDVSKGLGTYYVLDRVYLNATLLLTGYYPVDGSNYRNLALTGTNTLSLTWFKPPFLSEFNDGIFAKVQNLKTNTPTGATSYFPTIVIGSLFGNTSYTVVLEPYNNIIMASVCTYTICQLPYTPCKPNTNGNRVIGFWHTDVKPPICLLKRNFTFNVNAPWLYFHFYQQGGTFYAYYADKPSATTFLFSVYIGDILTQYFVLPFICTPTAGSTLLPLYWVTPLLKRQYLFNFNEKGVITSAVDCASSYISEIKCKTQSLLPSTGVYDLSGYTVQPVGVVYRRVPNLPDCKIEEWLTAKSVPSPLNWERRTFQNCNFNLSSLLRYVQAESLSCNNIDASKVYGMCFGSVSVDKFAIPRSRQIDLQIGNSGFLQTANYKIDTAATSCQLYYSLPKNNVTINNYNPSSWNRRYGFNDAGVFGKSKHDVAYAQQCFTVRPSYCPCAQPDIVSACTSQTKPMSAYCPTGTIHRECSLWNGPHLRSARVGSGTYTCECTCKPNPFDTYDLRCGQIKTIVNVGDHCEGLGVLEDKCGNSDPHKGCSCANDSFIGWSHDTCLVNDRCQIFANILLNGINSGTTCSTDLQLPNTEVATGVCVRYDLYGITGQGVFKEVKADYYNSWQALLYDVNGNLNGFRDLTTNKTYTIRSCYSGRVSAAYHKEAPEPALLYRNINCSYVFTNNISREENPLNYFDSYLGCVVNADNRTDEALPNCDLRMGAGLCVDYSKSRRARRSVSTGYRLTTFEPYMPMLVNDSVQSVGGLYEMQIPTNFTIGHHEEFIQIRAPKVTIDCAAFVCGDNAACRQQLVEYGSFCDNVNAILNEVNNLLDNMQLQVASALMQGVTISSRLPDGISGPIDDINFSPLLGCIGSTCAEDGNGPSAIRGRSAIEDLLFDKVKLSDVGFVEAYNNCTGGQEVRDLLCVQSFNGIKVLPPVLSESQISGYTAGATAAAMFPPWTAAAGVPFSLNVQYRINGLGVTMNVLSENQKMIASAFNNALGAIQEGFDATNSALGKIQSVVNANAEALNNLLNQLSNRFGAISASLQEILTRLDAVEAKAQIDRLINGRLTALNAYISKQLSDSTLIKFSAAQAIEKVNECVKSQTTRINFCGNGNHILSLVQNAPYGLCFIHFSYVPTSFKTANVSPGLCISGDRGLAPKAGYFVQDNGEWKFTGSNYYYPEPITDKNSVVMISCAVNYTKAPEVFLNNSIPNLPDFKEELDKWFKNQTSIAPDLSLDFEKLNVTFLDLTYEMNRIQDAIKKLNESYINLKEVGTYEMYVKWPWYVWLLIGLAGVAVCVLLFFICCCTGCGSCCFRKCGSCCDEYGGHQDSIVIHNISAHED.

The first 13 residues, 1-13 (MLFVFILLLPSCL), serve as a signal peptide directing secretion. Topologically, residues 14-1317 (GYIGDFRCIQ…GTYEMYVKWP (1304 aa)) are extracellular. The BetaCoV S1-NTD domain maps to 15–296 (YIGDFRCIQT…SYISEIKCKT (282 aa)). Residues 15 to 330 (YIGDFRCIQT…RRVPNLPDCK (316 aa)) form a receptor binding site region. Disulfide bonds link cysteine 21/cysteine 158, cysteine 153/cysteine 187, cysteine 165/cysteine 246, cysteine 284/cysteine 294, and cysteine 329/cysteine 354. 3 N-linked (GlcNAc...) asparagine; by host glycosylation sites follow: asparagine 31, asparagine 60, and asparagine 134. Residue asparagine 192 is glycosylated (N-linked (GlcNAc...) asparagine; by host). The region spanning 327 to 618 (PDCKIEEWLT…GINSGTTCST (292 aa)) is the BetaCoV S1-CTD domain. A glycan (N-linked (GlcNAc...) asparagine; by host) is linked at asparagine 357. 2 disulfide bridges follow: cysteine 372/cysteine 425 and cysteine 384/cysteine 616. The tract at residues 429 to 599 (YSLPKNNVTI…HDTCLVNDRC (171 aa)) is important for the neurovirulence. 8 N-linked (GlcNAc...) asparagine; by host glycosylation sites follow: asparagine 435, asparagine 582, asparagine 677, asparagine 709, asparagine 717, asparagine 740, asparagine 789, and asparagine 806. Fusion peptide stretches follow at residues 922-943 (SAIEDLLFDKVKLSDVGFVEAY) and 941-961 (EAYNNCTGGQEVRDLLCVQSF). Asparagine 945 is a glycosylation site (N-linked (GlcNAc...) asparagine; by host). A disulfide bridge links cysteine 946 with cysteine 957. The heptad repeat 1 stretch occupies residues 1022-1072 (QKMIASAFNNALGAIQEGFDATNSALGKIQSVVNANAEALNNLLNQLSNRF). The stretch at 1051 to 1095 (QSVVNANAEALNNLLNQLSNRFGAISASLQEILTRLDAVEAKAQI) forms a coiled coil. N-linked (GlcNAc...) asparagine; by host glycans are attached at residues asparagine 1232, asparagine 1242, asparagine 1261, asparagine 1277, and asparagine 1298. The segment at 1266–1306 (APDLSLDFEKLNVTFLDLTYEMNRIQDAIKKLNESYINLKE) is heptad repeat 2. The stretch at 1279–1307 (TFLDLTYEMNRIQDAIKKLNESYINLKEV) forms a coiled coil. A helical membrane pass occupies residues 1318–1338 (WYVWLLIGLAGVAVCVLLFFI). The Cytoplasmic portion of the chain corresponds to 1339–1376 (CCCTGCGSCCFRKCGSCCDEYGGHQDSIVIHNISAHED). A KxHxx motif is present at residues 1372–1376 (SAHED).

The protein belongs to the betacoronaviruses spike protein family. As to quaternary structure, homotrimer; each monomer consists of a S1 and a S2 subunit. The resulting peplomers protrude from the virus surface as spikes. Specific enzymatic cleavages in vivo yield mature proteins. The precursor is processed into S1 and S2 by host cell furin or another cellular protease to yield the mature S1 and S2 proteins. Additionally, a second cleavage leads to the release of a fusion peptide after viral attachment to host cell receptor. Post-translationally, the cytoplasmic Cys-rich domain is palmitoylated. Spike glycoprotein is digested within host endosomes.

It is found in the virion membrane. The protein resides in the host endoplasmic reticulum-Golgi intermediate compartment membrane. It localises to the host cell membrane. Its function is as follows. Attaches the virion to the cell membrane by interacting with host receptor, initiating the infection. Mediates fusion of the virion and cellular membranes by acting as a class I viral fusion protein. Under the current model, the protein has at least three conformational states: pre-fusion native state, pre-hairpin intermediate state, and post-fusion hairpin state. During viral and target cell membrane fusion, the coiled coil regions (heptad repeats) assume a trimer-of-hairpins structure, positioning the fusion peptide in close proximity to the C-terminal region of the ectodomain. The formation of this structure appears to drive apposition and subsequent fusion of viral and target cell membranes. Functionally, acts as a viral fusion peptide which is unmasked following S2 cleavage occurring upon virus endocytosis. This is Spike glycoprotein from Murine coronavirus (strain 4) (MHV-4).